The following is a 319-amino-acid chain: Ribonuclease Z (319 aa).

Histidine 62, histidine 64, aspartate 66, histidine 67, histidine 139, aspartate 209, and histidine 268 together coordinate Zn(2+). The Proton acceptor role is filled by aspartate 66.

The protein belongs to the RNase Z family. As to quaternary structure, homodimer. The cofactor is Zn(2+).

It carries out the reaction Endonucleolytic cleavage of RNA, removing extra 3' nucleotides from tRNA precursor, generating 3' termini of tRNAs. A 3'-hydroxy group is left at the tRNA terminus and a 5'-phosphoryl group is left at the trailer molecule.. Functionally, zinc phosphodiesterase, which displays some tRNA 3'-processing endonuclease activity. Probably involved in tRNA maturation, by removing a 3'-trailer from precursor tRNA. The protein is Ribonuclease Z of Pseudomonas putida (strain GB-1).